A 299-amino-acid polypeptide reads, in one-letter code: Zinc finger protein-like 1 homolog (299 aa).

The B box-type; degenerate zinc finger occupies 1 to 43 (MGLCKCPKRLVTNQFCFEHRVNVCEHCMVQSHPKCIVQSYLQW). The segment at 53–101 (CTLCGTTLEQGDCVRLVCYHVFHWDCLNARQAALPANTAPRGHQCPACS) adopts an RING-type; atypical zinc-finger fold. A disordered region spans residues 200–231 (AGDYASSRRPLLPRQSPIGGTDRDDNKYQRRT). The residue at position 215 (serine 215) is a Phosphoserine. The helical transmembrane segment at 256–276 (WFLVTAGILAFVLFVYLMAWL) threads the bilayer.

This sequence belongs to the ZFPL1 family.

Its subcellular location is the membrane. This is Zinc finger protein-like 1 homolog from Drosophila melanogaster (Fruit fly).